We begin with the raw amino-acid sequence, 99 residues long: MESLIKAIREEFISIFSLLKKPHKFTLEELRIRLRKLHNLLLQLFELEYDINRKVEVKYALEFVDSVYNQIDYVIPETLIPFAKEQLKYAVYRFNLYYT.

This is an uncharacterized protein from Acidianus bottle-shaped virus (isolate Italy/Pozzuoli) (ABV).